The primary structure comprises 415 residues: Fructose-like permease IIC component (415 aa).

The Cytoplasmic portion of the chain corresponds to 1-46; sequence MAIKKRSATVVPGASGAAAAVKNLQASKSSFWGELPQHVMSGISRM. The PTS EIIC type-2 domain occupies 35–415; it reads LPQHVMSGIS…RKGKLLIDSL (381 aa). A helical transmembrane segment spans residues 47-67; sequence VPTLIMGGVILAFSQLIAYSW. Over 68 to 101 the chain is Periplasmic; that stretch reads LKIPAEIGIMDALNSGKFSGFDLSLLKFAWLSQS. The chain crosses the membrane as a helical span at residues 102–122; the sequence is FGGVLFGFAIPMFAAFVANSI. At 123–126 the chain is on the cytoplasmic side; the sequence is GGKL. The helical transmembrane segment at 127-147 threads the bilayer; sequence AFPAGFIGGLMSTQPTQLLNF. At 148–157 the chain is on the periplasmic side; that stretch reads DPSTMQWATS. A helical membrane pass occupies residues 158–178; the sequence is SPVPSTFIGALIISIVAGYLV. Residues 179–197 are Cytoplasmic-facing; that stretch reads KWMNQKIQLPDFLLAFKTT. Residues 198–218 traverse the membrane as a helical segment; that stretch reads FLLPILSAIFVMLAMYYVITP. Topologically, residues 219-237 are periplasmic; it reads FGGWINGGIRTVLTAAGEK. The helical transmembrane segment at 238 to 258 threads the bilayer; that stretch reads GALMYAMGIAAATAIDLGGPI. Residues 259–276 are Cytoplasmic-facing; the sequence is NKAAGFVAFSFTTDHVLP. The helical transmembrane segment at 277–297 threads the bilayer; the sequence is VTARSIAIVIPPIGLGLATII. At 298–318 the chain is on the periplasmic side; it reads DRRLTGKRLFNAQLYPQGKTA. Residues 319–339 traverse the membrane as a helical segment; the sequence is MFLAFMGISEGAIPFALESPI. Residues 340-341 are Cytoplasmic-facing; sequence TA. The helical transmembrane segment at 342–362 threads the bilayer; sequence IPSYMVGAIVGSTAAVWLGAV. Over 363 to 378 the chain is Periplasmic; the sequence is QWFPESAIWAWPLVTN. Residues 379–399 form a helical membrane-spanning segment; the sequence is LGVYMAGIALGAIITALMVVF. Residues 400-415 are Cytoplasmic-facing; the sequence is LRLMMFRKGKLLIDSL.

It localises to the cell inner membrane. The phosphoenolpyruvate-dependent sugar phosphotransferase system (PTS), a major carbohydrate active -transport system, catalyzes the phosphorylation of incoming sugar substrates concomitant with their translocation across the cell membrane. This is Fructose-like permease IIC component (fryC) from Shigella flexneri.